Consider the following 447-residue polypeptide: Serine/threonine-protein phosphatase 2A 55 kDa regulatory subunit B gamma isoform (447 aa).

WD repeat units follow at residues 22-61 (TEADVISTVEFNHTGELLATGDKGGRVVIFQREPESKNAP), 87-128 (EIEE…KRPE), 171-209 (GHTYHINSISVNSDCETYMSADDLRINLWHLAITDRSFN), 220-260 (DLTE…LCDK), 279-317 (EIISSVSDVKFSHSGRYMLTRDYLTVKVWDLNMEARPIE), 334-375 (ESDC…DVTL), and 410-446 (DFTKKILHTAWHPAENIIAIAATNNLYIFQDKVNSDM).

Belongs to the phosphatase 2A regulatory subunit B family. PP2A consists of a common heterodimeric core enzyme, composed of a 36 kDa catalytic subunit (subunit C) and a 65 kDa constant regulatory subunit (PR65 or subunit A), that associates with a variety of regulatory subunits. Proteins that associate with the core dimer include three families of regulatory subunits B (the R2/B/PR55/B55, R3/B''/PR72/PR130/PR59 and R5/B'/B56 families), the 48 kDa variable regulatory subunit, viral proteins, and cell signaling molecules. Interacts with IER5. Highly expressed in brain.

In terms of biological role, the B regulatory subunit might modulate substrate selectivity and catalytic activity, and might also direct the localization of the catalytic enzyme to a particular subcellular compartment. This chain is Serine/threonine-protein phosphatase 2A 55 kDa regulatory subunit B gamma isoform (Ppp2r2c), found in Rattus norvegicus (Rat).